The sequence spans 562 residues: MDEAEYGRFVDWDKMEAGGQEQSPKVLSCTDFQELKQMARQGHWAKSHTLRAKVYQKLIKEIPCRTVTPDASVYRDIVGKIVGKRSASSLPLPEFVDDRQIPSYSLNSEGTGAVRKIISCISNQFPDISFCPALPSLVALLLHYSQDEAECFENVSRILACNDPNRRLVDQTFLAFESSCMTFGDLAGKYCQGPHKLMVAVSEDVLELYSDWQRWIFGELPFAYITRVFDVFLVEGYKVLFRVALALLKFFHKVRGGQPMESNNVKRDLQMFVRDLNKCVTPEKLLEKAFAIRLFSRKEIQLLQMANEKALQQKGITVKQKRQNVHLAVHAENFTSEIVSVKEMRDIWSWIPERFALSQPLLLFTNREHGNSLSRFYLHCEGHEPTLLLIKTTNQEVCGAFLSTDWSERKRSGNKLSFFGTGECFVFRLQPEVERYEWVVIKHPELGKVNSSSADKEANSSQSDKDGIDPSSRLSPFLATRHFNLPSKTASMFMAGSIDCIIIGGGDGQALYLDPDLNYGRTSHCNTFNNQPLCSETFQISIIEVWGFKDNMNNDGAHSALH.

A 1,2-diacyl-sn-glycero-3-phospho-(1D-myo-inositol)-binding positions include lysine 36, arginine 40, lysine 238, arginine 242, and 293 to 297 (RLFSR). Residues 42-259 (GHWAKSHTLR…FFHKVRGGQP (218 aa)) enclose the Rab-GAP TBC domain. The TLDc domain maps to 337 to 549 (EIVSVKEMRD…ISIIEVWGFK (213 aa)). Residues 450–471 (NSSSADKEANSSQSDKDGIDPS) are disordered. Basic and acidic residues predominate over residues 454 to 468 (ADKEANSSQSDKDGI).

Interacts with ARF6.

The protein resides in the cell membrane. It is found in the cytoplasm. Its subcellular location is the cytoplasmic vesicle membrane. It localises to the presynapse. Its function is as follows. May act as a GTPase-activating protein for Rab family protein(s). Involved in neuronal projections development, probably through a negative modulation of ARF6 function. Involved in the regulation of synaptic vesicle trafficking. The sequence is that of TBC1 domain family member 24 (tbc1d24) from Xenopus laevis (African clawed frog).